The primary structure comprises 168 residues: 3'-5' exoribonuclease MT2234.1 (168 aa).

Aspartate 6 contacts Mg(2+). Positions 6–9 are RNA binding; the sequence is DTEF.

Homodimer. Mg(2+) is required as a cofactor.

Exonuclease that cleaves single-stranded 3' overhangs of double-stranded RNA. The sequence is that of 3'-5' exoribonuclease MT2234.1 from Mycobacterium tuberculosis (strain CDC 1551 / Oshkosh).